Reading from the N-terminus, the 264-residue chain is ATP synthase subunit a (264 aa).

6 consecutive transmembrane segments (helical) span residues 29 to 49, 89 to 109, 134 to 154, 177 to 197, 208 to 228, and 235 to 255; these read TWHI…LWLF, VIAP…FMDM, DLNI…YYSI, IPVN…SLAL, LIFI…ALGV, and LIFH…LTIV.

This sequence belongs to the ATPase A chain family. F-type ATPases have 2 components, CF(1) - the catalytic core - and CF(0) - the membrane proton channel. CF(1) has five subunits: alpha(3), beta(3), gamma(1), delta(1), epsilon(1). CF(0) has three main subunits: a(1), b(2) and c(9-12). The alpha and beta chains form an alternating ring which encloses part of the gamma chain. CF(1) is attached to CF(0) by a central stalk formed by the gamma and epsilon chains, while a peripheral stalk is formed by the delta and b chains.

The protein resides in the cell inner membrane. Key component of the proton channel; it plays a direct role in the translocation of protons across the membrane. This Shewanella sediminis (strain HAW-EB3) protein is ATP synthase subunit a.